Consider the following 457-residue polypeptide: Siroheme synthase (457 aa).

The segment at 1–204 is precorrin-2 dehydrogenase /sirohydrochlorin ferrochelatase; the sequence is MDHLPIFCQL…ADEKAVNATT (204 aa). NAD(+) is bound by residues 22-23 and 43-44; these read DV and LT. Ser-128 carries the post-translational modification Phosphoserine. Residues 216 to 457 are uroporphyrinogen-III C-methyltransferase; the sequence is GEVVLVGAGP…RDKLNWFSNH (242 aa). S-adenosyl-L-methionine is bound at residue Pro-225. The active-site Proton acceptor is the Asp-248. The Proton donor role is filled by Lys-270. Residues 301 to 303, Ile-306, 331 to 332, Met-382, and Gly-411 contribute to the S-adenosyl-L-methionine site; these read GGD and TA.

The protein in the N-terminal section; belongs to the precorrin-2 dehydrogenase / sirohydrochlorin ferrochelatase family. In the C-terminal section; belongs to the precorrin methyltransferase family.

The enzyme catalyses uroporphyrinogen III + 2 S-adenosyl-L-methionine = precorrin-2 + 2 S-adenosyl-L-homocysteine + H(+). It catalyses the reaction precorrin-2 + NAD(+) = sirohydrochlorin + NADH + 2 H(+). It carries out the reaction siroheme + 2 H(+) = sirohydrochlorin + Fe(2+). Its pathway is cofactor biosynthesis; adenosylcobalamin biosynthesis; precorrin-2 from uroporphyrinogen III: step 1/1. It functions in the pathway cofactor biosynthesis; adenosylcobalamin biosynthesis; sirohydrochlorin from precorrin-2: step 1/1. The protein operates within porphyrin-containing compound metabolism; siroheme biosynthesis; precorrin-2 from uroporphyrinogen III: step 1/1. It participates in porphyrin-containing compound metabolism; siroheme biosynthesis; siroheme from sirohydrochlorin: step 1/1. Its pathway is porphyrin-containing compound metabolism; siroheme biosynthesis; sirohydrochlorin from precorrin-2: step 1/1. In terms of biological role, multifunctional enzyme that catalyzes the SAM-dependent methylations of uroporphyrinogen III at position C-2 and C-7 to form precorrin-2 via precorrin-1. Then it catalyzes the NAD-dependent ring dehydrogenation of precorrin-2 to yield sirohydrochlorin. Finally, it catalyzes the ferrochelation of sirohydrochlorin to yield siroheme. This Salmonella schwarzengrund (strain CVM19633) protein is Siroheme synthase.